Consider the following 469-residue polypeptide: Cholesterol 7-desaturase nvd (469 aa).

The signal sequence occupies residues 1–25 (MASFCASKFLPGLLMLGLGLAVALA). The helical transmembrane segment at 58–78 (NFVASQTLLTLTIFGVASFIL) threads the bilayer. The 107-residue stretch at 132-238 (IPLVASQDLV…VIEQNGFVLV (107 aa)) folds into the Rieske domain. 4 residues coordinate [2Fe-2S] cluster: C172, H174, C192, and H195.

The protein belongs to the cholesterol 7-desaturase family. It depends on [2Fe-2S] cluster as a cofactor.

It localises to the membrane. The enzyme catalyses cholesterol + NADPH + O2 + H(+) = 7-dehydrocholesterol + NADP(+) + 2 H2O. It catalyses the reaction cholesterol + NADH + O2 + H(+) = 7-dehydrocholesterol + NAD(+) + 2 H2O. The protein operates within steroid hormone biosynthesis; dafachronic acid biosynthesis. Its function is as follows. Catalyzes the production of 7-dehydrocholesterol (7-DHC or cholesta-5,7-dien-3beta-ol) by inserting a double bond (desaturating) at the C7-C8 single bond of cholesterol. Essential regulator of steroid biosynthesis as this reaction is the first step in the synthesis of the steroid hormone Delta(7)-dafachronic acid. This is Cholesterol 7-desaturase nvd from Hemicentrotus pulcherrimus (Sea urchin).